The chain runs to 85 residues: Small ribosomal subunit protein uS17 (85 aa).

The protein belongs to the universal ribosomal protein uS17 family. In terms of assembly, part of the 30S ribosomal subunit.

In terms of biological role, one of the primary rRNA binding proteins, it binds specifically to the 5'-end of 16S ribosomal RNA. This chain is Small ribosomal subunit protein uS17, found in Mycoplasma genitalium (strain ATCC 33530 / DSM 19775 / NCTC 10195 / G37) (Mycoplasmoides genitalium).